The chain runs to 51 residues: Nawaprin (51 aa).

A WAP domain is found at 1–50; sequence NEKSGSCPDMSMPIPPLGICKTLCNSDSGCPNVQKCCKNGCGFMTCTTPV. Disulfide bonds link Cys7–Cys37, Cys20–Cys41, Cys24–Cys36, and Cys30–Cys46.

In terms of tissue distribution, expressed by the venom gland.

The protein localises to the secreted. Damages membranes of susceptible bacteria. Has no hemolytic activity. Not toxic to mice. Does not inhibit the proteinases elastase and cathepsin G. The polypeptide is Nawaprin (Naja nigricollis (Black-necked spitting cobra)).